A 273-amino-acid chain; its full sequence is 3-methyl-2-oxobutanoate hydroxymethyltransferase (273 aa).

Residues Asp41 and Asp80 each contribute to the Mg(2+) site. Residues 41–42, Asp80, and Lys110 each bind 3-methyl-2-oxobutanoate; that span reads DS. Position 112 (Glu112) interacts with Mg(2+). The active-site Proton acceptor is the Glu180.

Belongs to the PanB family. Homodecamer; pentamer of dimers. Mg(2+) is required as a cofactor.

It localises to the cytoplasm. It catalyses the reaction 3-methyl-2-oxobutanoate + (6R)-5,10-methylene-5,6,7,8-tetrahydrofolate + H2O = 2-dehydropantoate + (6S)-5,6,7,8-tetrahydrofolate. It functions in the pathway cofactor biosynthesis; (R)-pantothenate biosynthesis; (R)-pantoate from 3-methyl-2-oxobutanoate: step 1/2. Catalyzes the reversible reaction in which hydroxymethyl group from 5,10-methylenetetrahydrofolate is transferred onto alpha-ketoisovalerate to form ketopantoate. This is 3-methyl-2-oxobutanoate hydroxymethyltransferase from Deinococcus geothermalis (strain DSM 11300 / CIP 105573 / AG-3a).